Consider the following 134-residue polypeptide: Small ribosomal subunit protein uS11 (134 aa).

The interval 114–134 (SISDVTPQPHNGCRPPKRRRV) is disordered.

This sequence belongs to the universal ribosomal protein uS11 family. As to quaternary structure, part of the 30S ribosomal subunit. Interacts with proteins S7 and S18. Binds to IF-3.

Located on the platform of the 30S subunit, it bridges several disparate RNA helices of the 16S rRNA. Forms part of the Shine-Dalgarno cleft in the 70S ribosome. This Corynebacterium efficiens (strain DSM 44549 / YS-314 / AJ 12310 / JCM 11189 / NBRC 100395) protein is Small ribosomal subunit protein uS11.